The chain runs to 420 residues: Multifunctional CCA protein (420 aa).

ATP-binding residues include Gly8 and Arg11. Residues Gly8 and Arg11 each contribute to the CTP site. Mg(2+) is bound by residues Asp21 and Asp23. ATP contacts are provided by Arg91, Arg137, and Arg140. Positions 91, 137, and 140 each coordinate CTP. One can recognise an HD domain in the interval 228 to 334; sequence TFVHTMLVLQ…LKLFNRLDVW (107 aa).

It belongs to the tRNA nucleotidyltransferase/poly(A) polymerase family. Bacterial CCA-adding enzyme type 1 subfamily. As to quaternary structure, monomer. Can also form homodimers and oligomers. It depends on Mg(2+) as a cofactor. Ni(2+) is required as a cofactor.

The enzyme catalyses a tRNA precursor + 2 CTP + ATP = a tRNA with a 3' CCA end + 3 diphosphate. It carries out the reaction a tRNA with a 3' CCA end + 2 CTP + ATP = a tRNA with a 3' CCACCA end + 3 diphosphate. Its function is as follows. Catalyzes the addition and repair of the essential 3'-terminal CCA sequence in tRNAs without using a nucleic acid template. Adds these three nucleotides in the order of C, C, and A to the tRNA nucleotide-73, using CTP and ATP as substrates and producing inorganic pyrophosphate. tRNA 3'-terminal CCA addition is required both for tRNA processing and repair. Also involved in tRNA surveillance by mediating tandem CCA addition to generate a CCACCA at the 3' terminus of unstable tRNAs. While stable tRNAs receive only 3'-terminal CCA, unstable tRNAs are marked with CCACCA and rapidly degraded. In Pasteurella multocida (strain Pm70), this protein is Multifunctional CCA protein.